Here is a 147-residue protein sequence, read N- to C-terminus: Peptide deformylase (147 aa).

Fe cation contacts are provided by Cys88 and His130. Glu131 is an active-site residue. A Fe cation-binding site is contributed by His134.

It belongs to the polypeptide deformylase family. It depends on Fe(2+) as a cofactor.

The enzyme catalyses N-terminal N-formyl-L-methionyl-[peptide] + H2O = N-terminal L-methionyl-[peptide] + formate. Removes the formyl group from the N-terminal Met of newly synthesized proteins. Requires at least a dipeptide for an efficient rate of reaction. N-terminal L-methionine is a prerequisite for activity but the enzyme has broad specificity at other positions. The chain is Peptide deformylase from Clostridium botulinum (strain Alaska E43 / Type E3).